The following is a 593-amino-acid chain: Cyclin-dependent kinase-like 3 (593 aa).

The Protein kinase domain occupies 4 to 286; that stretch reads YETLGKVGEG…STDLLHHDYF (283 aa). Residues 10 to 18 and Lys-33 each bind ATP; that span reads VGEGSYGTV. The short motif at 45–51 is the [NKR]KIAxRE element; that stretch reads KIATREI. Residue Asp-125 is the Proton acceptor of the active site. Thr-158 carries the post-translational modification Phosphothreonine. The residue at position 160 (Tyr-160) is a Phosphotyrosine. The span at 368-403 shows a compositional bias: basic and acidic residues; the sequence is GKGDVPDLKKTESEGEHRQQGTAEDTHPTSLDRKPS. The interval 368-512 is disordered; that stretch reads GKGDVPDLKK…NDQIASGNKR (145 aa). Positions 436–452 are enriched in low complexity; sequence NLTSSNLLAANPSSNLS. Composition is skewed to polar residues over residues 468–491 and 499–508; these read SSQT…QVQT and RTGQNDQIAS.

Belongs to the protein kinase superfamily. CMGC Ser/Thr protein kinase family. CDC2/CDKX subfamily. Highly expressed in brain, and to a lower extent in heart and testis.

It is found in the nucleus. It localises to the cytoplasm. The catalysed reaction is L-seryl-[protein] + ATP = O-phospho-L-seryl-[protein] + ADP + H(+). The enzyme catalyses L-threonyl-[protein] + ATP = O-phospho-L-threonyl-[protein] + ADP + H(+). The polypeptide is Cyclin-dependent kinase-like 3 (Rattus norvegicus (Rat)).